The chain runs to 401 residues: Methionyl-tRNA formyltransferase, mitochondrial (401 aa).

A mitochondrion-targeting transit peptide spans 1 to 26 (MVKMRRITPTRLLFTCRYISNNASPP). Residues 18 to 20 (YIS) and 66 to 70 (VVTRS) each bind (6R)-10-formyltetrahydrofolate.

Belongs to the Fmt family. Phosphorylated by GCN2 in response to nutrient deprivation. Phosphorylation mediates retention of FMT1 in the cytoplasm.

It localises to the mitochondrion. It is found in the mitochondrion matrix. The protein resides in the cytoplasm. The catalysed reaction is L-methionyl-tRNA(fMet) + (6R)-10-formyltetrahydrofolate = N-formyl-L-methionyl-tRNA(fMet) + (6S)-5,6,7,8-tetrahydrofolate + H(+). Formylates methionyl-tRNA in mitochondria and the cytoplasm. Responsible for the formylation of the 8 N-terminally formylated (Nt-formylated) mitochondrial matrix proteins that are encoded by mitochondrial DNA. Nt-formylated proteins in the cytoplasm are strongly up-regulated in stationary phase or upon starvation for specific amino acids (His or Lys) and are targeted for degradation by a PSH1 E3 ubiquitin ligase-mediated fMet/N-end rule pathway. Increased Nt-formylation of cytosolic proteins appears to be important for adaptation to these stresses. Stationary phase-degraded Nt-formylated proteins include histone H3-like centromeric protein CSE4, Mediator complex subunit 3 (PGD1) and small ribosomal subunit protein uS8-A (RPS22A). This is Methionyl-tRNA formyltransferase, mitochondrial (FMT1) from Saccharomyces cerevisiae (strain ATCC 204508 / S288c) (Baker's yeast).